Consider the following 140-residue polypeptide: Ribosome maturation factor RimP (140 aa).

Belongs to the RimP family.

It is found in the cytoplasm. In terms of biological role, required for maturation of 30S ribosomal subunits. This Campylobacter fetus subsp. fetus (strain 82-40) protein is Ribosome maturation factor RimP.